The following is a 367-amino-acid chain: Leucine-rich repeat-containing protein 28 (367 aa).

LRR repeat units follow at residues 16 to 36, 42 to 63, 66 to 87, 89 to 111, 112 to 133, 135 to 156, 158 to 179, 181 to 202, and 204 to 226; these read KHKN…ELLK, YLER…LAQK, NLVE…IGSL, KLQS…GRLK, SLRH…IGKL, ELQT…LYQC, SLQY…LCQL, SLNE…LGRS, and ELQY…LYNK.

The polypeptide is Leucine-rich repeat-containing protein 28 (lrrc28) (Xenopus tropicalis (Western clawed frog)).